Reading from the N-terminus, the 591-residue chain is Protein NRT1/ PTR FAMILY 1.1 (591 aa).

11 consecutive transmembrane segments (helical) span residues 68 to 88, 98 to 118, 139 to 159, 186 to 206, 216 to 236, 329 to 349, 374 to 394, 418 to 438, 460 to 480, 496 to 516, and 543 to 563; these read TVLF…AFLS, IVIA…TAML, SSQL…SGGI, FFGW…TVIV, IGFG…VFAS, LKAL…SINV, IPAG…VVLY, MGLG…VEHY, AMWL…TGIG, IAAS…SVIL, and YYWV…VCSW.

Belongs to the major facilitator superfamily. Proton-dependent oligopeptide transporter (POT/PTR) (TC 2.A.17) family. As to expression, expressed in siliques, shoots and roots. Mainly detected in larger expanded leaves, in the companion cells of major veins.

The protein localises to the cell membrane. Functionally, low-affinity nitrate transporter involved in xylem-to-phloem transfer for redistributing nitrate into developing leaves. Not involved in dipeptides transport. The polypeptide is Protein NRT1/ PTR FAMILY 1.1 (NPF1.1) (Arabidopsis thaliana (Mouse-ear cress)).